Consider the following 91-residue polypeptide: UPF0250 protein Pfl01_4965 (91 aa).

This sequence belongs to the UPF0250 family.

This chain is UPF0250 protein Pfl01_4965, found in Pseudomonas fluorescens (strain Pf0-1).